The primary structure comprises 362 residues: Cytochrome c peroxidase, mitochondrial (362 aa).

A mitochondrion-targeting transit peptide spans 1–40 (MASASRQILRAASRASTRTAFAPAASRGLAARTIAGRRFY). The Proton acceptor role is filled by His121. His244 contacts heme b. The Tryptophan radical intermediate role is filled by Trp260.

It belongs to the peroxidase family. Cytochrome c peroxidase subfamily. As to quaternary structure, forms a one-to-one complex with cytochrome c. Requires heme b as cofactor.

Its subcellular location is the mitochondrion matrix. The protein resides in the mitochondrion intermembrane space. It carries out the reaction 2 Fe(II)-[cytochrome c] + H2O2 + 2 H(+) = 2 Fe(III)-[cytochrome c] + 2 H2O. In terms of biological role, destroys radicals which are normally produced within the cells and which are toxic to biological systems. The polypeptide is Cytochrome c peroxidase, mitochondrial (CCP1) (Pyricularia oryzae (strain 70-15 / ATCC MYA-4617 / FGSC 8958) (Rice blast fungus)).